The primary structure comprises 190 residues: dCTP deaminase, dUMP-forming (190 aa).

Residues 101-106, D119, 127-129, Q148, Y162, and Q174 contribute to the dCTP site; these read KSSLGR and TLE. E129 serves as the catalytic Proton donor/acceptor. The segment at 163 to 190 is disordered; it reads GSSQVGSKYQGQRGPTPSKSYQNFVKSN.

This sequence belongs to the dCTP deaminase family. In terms of assembly, homotrimer.

The enzyme catalyses dCTP + 2 H2O = dUMP + NH4(+) + diphosphate. The protein operates within pyrimidine metabolism; dUMP biosynthesis; dUMP from dCTP: step 1/1. Bifunctional enzyme that catalyzes both the deamination of dCTP to dUTP and the hydrolysis of dUTP to dUMP without releasing the toxic dUTP intermediate. The chain is dCTP deaminase, dUMP-forming from Mycolicibacterium gilvum (strain PYR-GCK) (Mycobacterium gilvum (strain PYR-GCK)).